Reading from the N-terminus, the 520-residue chain is GMP synthase [glutamine-hydrolyzing] (520 aa).

One can recognise a Glutamine amidotransferase type-1 domain in the interval 9–202; sequence KILILDFGSQ…VRKICGCSGK (194 aa). Cys86 serves as the catalytic Nucleophile. Catalysis depends on residues His176 and Glu178. The GMPS ATP-PPase domain maps to 203-395; it reads WTPGQIIEDA…LGLPHQMVWR (193 aa). 230 to 236 provides a ligand contact to ATP; that stretch reads SGGVDSS.

As to quaternary structure, homodimer.

It catalyses the reaction XMP + L-glutamine + ATP + H2O = GMP + L-glutamate + AMP + diphosphate + 2 H(+). Its pathway is purine metabolism; GMP biosynthesis; GMP from XMP (L-Gln route): step 1/1. Catalyzes the synthesis of GMP from XMP. This is GMP synthase [glutamine-hydrolyzing] from Geotalea daltonii (strain DSM 22248 / JCM 15807 / FRC-32) (Geobacter daltonii).